A 290-amino-acid chain; its full sequence is 33 kDa chaperonin (290 aa).

2 cysteine pairs are disulfide-bonded: Cys235–Cys237 and Cys268–Cys271.

The protein belongs to the HSP33 family. In terms of processing, under oxidizing conditions two disulfide bonds are formed involving the reactive cysteines. Under reducing conditions zinc is bound to the reactive cysteines and the protein is inactive.

It is found in the cytoplasm. In terms of biological role, redox regulated molecular chaperone. Protects both thermally unfolding and oxidatively damaged proteins from irreversible aggregation. Plays an important role in the bacterial defense system toward oxidative stress. This Streptococcus pyogenes serotype M1 protein is 33 kDa chaperonin.